A 424-amino-acid polypeptide reads, in one-letter code: UDP-N-acetylglucosamine 1-carboxyvinyltransferase (424 aa).

22–23 lines the phosphoenolpyruvate pocket; the sequence is KN. UDP-N-acetyl-alpha-D-glucosamine is bound at residue R93. Residue C117 is the Proton donor of the active site. The residue at position 117 (C117) is a 2-(S-cysteinyl)pyruvic acid O-phosphothioketal. UDP-N-acetyl-alpha-D-glucosamine-binding positions include 122–126, D307, and I329; that span reads RPVDL.

Belongs to the EPSP synthase family. MurA subfamily.

It is found in the cytoplasm. The catalysed reaction is phosphoenolpyruvate + UDP-N-acetyl-alpha-D-glucosamine = UDP-N-acetyl-3-O-(1-carboxyvinyl)-alpha-D-glucosamine + phosphate. It functions in the pathway cell wall biogenesis; peptidoglycan biosynthesis. Functionally, cell wall formation. Adds enolpyruvyl to UDP-N-acetylglucosamine. The chain is UDP-N-acetylglucosamine 1-carboxyvinyltransferase from Chlorobaculum parvum (strain DSM 263 / NCIMB 8327) (Chlorobium vibrioforme subsp. thiosulfatophilum).